A 218-amino-acid polypeptide reads, in one-letter code: uncharacterized protein (218 aa).

It belongs to the glycosyltransferase 2 family.

This is an uncharacterized protein from Mycobacterium bovis (strain ATCC BAA-935 / AF2122/97).